Here is a 272-residue protein sequence, read N- to C-terminus: Phosphate import ATP-binding protein PstB (272 aa).

An ABC transporter domain is found at 18–257 (VSMQNVTISY…FNDTQSIFNS (240 aa)). Position 50-57 (50-57 (GPSGCGKS)) interacts with ATP.

This sequence belongs to the ABC transporter superfamily. Phosphate importer (TC 3.A.1.7) family. As to quaternary structure, the complex is composed of two ATP-binding proteins (PstB), two transmembrane proteins (PstC and PstA) and a solute-binding protein (PstS).

The protein localises to the cell inner membrane. The enzyme catalyses phosphate(out) + ATP + H2O = ADP + 2 phosphate(in) + H(+). Functionally, part of the ABC transporter complex PstSACB involved in phosphate import. Responsible for energy coupling to the transport system. The chain is Phosphate import ATP-binding protein PstB from Synechococcus sp. (strain CC9902).